Here is a 681-residue protein sequence, read N- to C-terminus: Sorting nexin-41 (681 aa).

A compositionally biased stretch (acidic residues) spans 1–12; sequence MSTDNLFEDIEQ. The disordered stretch occupies residues 1–94; sequence MSTDNLFEDI…HNTSLNNGYP (94 aa). Positions 13 to 24 are enriched in polar residues; that stretch reads DNNPSFYGNPSI. The 124-residue stretch at 113 to 236 folds into the PX domain; that stretch reads NDSQLQVDII…KFFDPNYELC (124 aa). Positions 151, 153, 177, and 200 each coordinate a 1,2-diacyl-sn-glycero-3-phospho-(1D-myo-inositol-3-phosphate). 2 disordered regions span residues 475–505 and 558–597; these read LASRISTDNDSNNSNNSGNNNNDGDLDTENF and TATGSTEQQSQQQSAPNSPQREQQQQQSQSQSHHSHQTSI. Low complexity-rich tracts occupy residues 482 to 497 and 558 to 589; these read DNDSNNSNNSGNNNND and TATGSTEQQSQQQSAPNSPQREQQQQQSQSQS.

The protein belongs to the sorting nexin family.

Its subcellular location is the endosome membrane. It is found in the endomembrane system. In terms of biological role, may be required for cytoplasm to vacuole transport (Cvt) and pexophagy. The polypeptide is Sorting nexin-41 (SNX41) (Candida albicans (strain SC5314 / ATCC MYA-2876) (Yeast)).